A 1086-amino-acid polypeptide reads, in one-letter code: Isoleucine--tRNA ligase (1086 aa).

A 'HIGH' region motif is present at residues 53-63 (PFANGLPHYGH). A 'KMSKS' region motif is present at residues 624 to 628 (KLSKR). Position 627 (lysine 627) interacts with ATP.

The protein belongs to the class-I aminoacyl-tRNA synthetase family. IleS type 2 subfamily. In terms of assembly, monomer. Zn(2+) serves as cofactor.

It is found in the cytoplasm. It catalyses the reaction tRNA(Ile) + L-isoleucine + ATP = L-isoleucyl-tRNA(Ile) + AMP + diphosphate. Catalyzes the attachment of isoleucine to tRNA(Ile). As IleRS can inadvertently accommodate and process structurally similar amino acids such as valine, to avoid such errors it has two additional distinct tRNA(Ile)-dependent editing activities. One activity is designated as 'pretransfer' editing and involves the hydrolysis of activated Val-AMP. The other activity is designated 'posttransfer' editing and involves deacylation of mischarged Val-tRNA(Ile). The protein is Isoleucine--tRNA ligase of Rickettsia prowazekii (strain Madrid E).